The chain runs to 220 residues: Early protein OPG038 (220 aa).

Residues methionine 1–serine 17 form the signal peptide.

Belongs to the orthopoxvirus OPG038 family. In terms of assembly, homooligomer. Interacts with host CD80 and CD86 when secreted. Glycosylated by host.

It localises to the host endoplasmic reticulum. Its subcellular location is the secreted. Plays a role in immune evasion. When secreted, inhibits T-cell activation by preventing the binding of host CD80 and CD86 to soluble CTLA4 and CD28. In the infected cell, may inhibits host NF kappa B activation. This chain is Early protein OPG038 (OPG038), found in Homo sapiens (Human).